Reading from the N-terminus, the 955-residue chain is MAM domain-containing glycosylphosphatidylinositol anchor protein 1 (955 aa).

The N-terminal stretch at 1–18 (MEVTCLLLLALIPFHCRG) is a signal peptide. 2 consecutive Ig-like domains span residues 24–123 (PAQA…KSIR) and 132–230 (PMLT…KAIT). N-linked (GlcNAc...) asparagine glycosylation is found at asparagine 42 and asparagine 90. 2 cysteine pairs are disulfide-bonded: cysteine 60–cysteine 108 and cysteine 157–cysteine 214. Asparagine 235, asparagine 247, asparagine 257, asparagine 307, and asparagine 331 each carry an N-linked (GlcNAc...) asparagine glycan. In terms of domain architecture, Ig-like 3 spans 240–323 (PALKLSVNET…VGNPAKKTVN (84 aa)). Cysteine 262 and cysteine 308 are joined by a disulfide. Ig-like domains follow at residues 338–432 (PDVI…VEVN), 440–532 (PTIS…AQVQ), and 539–631 (PEVE…FQVS). A disulfide bridge links cysteine 357 with cysteine 415. A glycan (N-linked (GlcNAc...) asparagine) is linked at asparagine 432. Disulfide bonds link cysteine 463–cysteine 514 and cysteine 560–cysteine 615. Residues 643-743 (TPNPTRSHKL…SRIIHYTEPI (101 aa)) form the Fibronectin type-III domain. Asparagine 655 and asparagine 747 each carry an N-linked (GlcNAc...) asparagine glycan. In terms of domain architecture, MAM spans 751 to 918 (NTCHFEDEKI…VTLKKGECPR (168 aa)). A compositionally biased stretch (polar residues) spans 779-788 (LTQNPKRSPN). The tract at residues 779–798 (LTQNPKRSPNTGPPTDISGT) is disordered. Asparagine 826 carries an N-linked (GlcNAc...) asparagine glycan. The GPI-anchor amidated serine moiety is linked to residue serine 932. The propeptide at 933-955 (GAPCQSSPQLWGPMAIFLLALQR) is removed in mature form.

As to quaternary structure, interacts heterophilically through its MAM domain with proteins in axon-rich regions and through its Ig-like domains with proteins in differentiating muscle. Interacts (through the Ig-like domains) with NLGN2. Has been found in brain, heart, skeletal muscle and kidney. Found to be overexpressed in tumor tissues.

The protein resides in the cell membrane. Its function is as follows. Required for radial migration of cortical neurons in the superficial layer of the neocortex. Plays a role in the formation or maintenance of inhibitory synapses. May function by inhibiting the activity of NLGN2. The sequence is that of MAM domain-containing glycosylphosphatidylinositol anchor protein 1 (MDGA1) from Homo sapiens (Human).